A 306-amino-acid chain; its full sequence is Protein pxr1 (306 aa).

Residues Met-1 to Lys-11 show a composition bias toward basic residues. Disordered stretches follow at residues Met-1–Gly-27 and Ala-148–Pro-241. Residues Asp-15–Gly-27 show a composition bias toward polar residues. Residues Thr-25 to Lys-79 form the G-patch domain. Basic and acidic residues predominate over residues Asn-182–Gln-191. The segment covering Lys-219 to Lys-228 has biased composition (basic residues).

The protein belongs to the PINX1 family.

The protein localises to the nucleus. It localises to the nucleolus. In terms of biological role, involved in rRNA-processing at A0, A1 and A2 sites and negatively regulates telomerase. The chain is Protein pxr1 (pxr1) from Aspergillus oryzae (strain ATCC 42149 / RIB 40) (Yellow koji mold).